We begin with the raw amino-acid sequence, 552 residues long: Glutamine--tRNA ligase (552 aa).

A 'HIGH' region motif is present at residues 34–44 (PEPNGYLHIGH). ATP contacts are provided by residues 35–37 (EPN) and 41–47 (HIGHAKS). Residues aspartate 67 and tyrosine 212 each coordinate L-glutamine. Residues threonine 231, 261-262 (RL), and 269-271 (MSK) each bind ATP. Positions 268 to 272 (IMSKR) match the 'KMSKS' region motif.

This sequence belongs to the class-I aminoacyl-tRNA synthetase family. As to quaternary structure, monomer.

The protein resides in the cytoplasm. The enzyme catalyses tRNA(Gln) + L-glutamine + ATP = L-glutaminyl-tRNA(Gln) + AMP + diphosphate. This Aliivibrio salmonicida (strain LFI1238) (Vibrio salmonicida (strain LFI1238)) protein is Glutamine--tRNA ligase.